The following is a 324-amino-acid chain: Alkanal monooxygenase beta chain (324 aa).

Belongs to the bacterial luciferase oxidoreductase family. In terms of assembly, heterodimer of an alpha and a beta chain.

The enzyme catalyses a long-chain fatty aldehyde + FMNH2 + O2 = a long-chain fatty acid + hnu + FMN + H2O + 2 H(+). Its function is as follows. Light-emitting reaction in luminous bacteria. The specific role of the beta subunit is unknown, but it is absolutely required for bioluminescence activity. In Vibrio harveyi (Beneckea harveyi), this protein is Alkanal monooxygenase beta chain (luxB).